Reading from the N-terminus, the 1273-residue chain is DNA-directed RNA polymerase subunit beta (1273 aa).

It belongs to the RNA polymerase beta chain family. As to quaternary structure, the RNAP catalytic core consists of 2 alpha, 1 beta, 1 beta' and 1 omega subunit. When a sigma factor is associated with the core the holoenzyme is formed, which can initiate transcription.

The catalysed reaction is RNA(n) + a ribonucleoside 5'-triphosphate = RNA(n+1) + diphosphate. Its function is as follows. DNA-dependent RNA polymerase catalyzes the transcription of DNA into RNA using the four ribonucleoside triphosphates as substrates. The polypeptide is DNA-directed RNA polymerase subunit beta (Onion yellows phytoplasma (strain OY-M)).